Here is a 275-residue protein sequence, read N- to C-terminus: Voltage-dependent calcium channel gamma-5 subunit (275 aa).

4 helical membrane-spanning segments follow: residues 8–28 (ALTL…GIAV), 103–123 (FPLV…IGHI), 129–149 (ILAF…VVGL), and 181–201 (FAAI…YLFM).

It belongs to the PMP-22/EMP/MP20 family. CACNG subfamily. The L-type calcium channel is composed of five subunits: alpha-1, alpha-2/delta, beta and gamma. Acts as an auxiliary subunit for AMPA-selective glutamate receptors (AMPARs). Found in a complex with GRIA1, GRIA2, GRIA3, GRIA4, CNIH2, CNIH3, CACNG2, CACNG3, CACNG4, CACNG7 and CACNG8. Interacts with GRIA1, GRIA2, GRIA3 and GRIA4. As to expression, brain. Enriched in Bergman glia, as well as a variety of neuronal populations including locus coeruleus, olfactory bulb, lateral septal nucleus, interpeduncular nucleus, and the CA2 and rostral/medial CA1 regions of hippocampus.

It localises to the membrane. The protein resides in the postsynaptic density membrane. In terms of biological role, regulates the gating properties of AMPA-selective glutamate receptors (AMPARs). Modulates their gating properties by accelerating their rates of activation, deactivation and desensitization. Displays subunit-specific AMPA receptor regulation. Shows specificity for GRIA1, GRIA4 and the long isoform of GRIA2. Thought to stabilize the calcium channel in an inactivated (closed) state. The sequence is that of Voltage-dependent calcium channel gamma-5 subunit (Cacng5) from Mus musculus (Mouse).